Here is a 578-residue protein sequence, read N- to C-terminus: SCARECROW-LIKE protein 7 (578 aa).

The span at 18-29 (VIQQQQQQQQQQ) shows a compositional bias: low complexity. 2 disordered regions span residues 18–84 (VIQQ…LAYG) and 146–173 (PPPPVPSPPPTHAAATATATAATAAPRP). Over residues 49–61 (PHHHQQKHHHHHQ) the composition is skewed to basic residues. The span at 62 to 74 (QMPAMPQAPPSSH) shows a compositional bias: low complexity. Over residues 146-156 (PPPPVPSPPPT) the composition is skewed to pro residues. A compositionally biased stretch (low complexity) spans 157–173 (HAAATATATAATAAPRP). The 381-residue stretch at 198–578 (SADASCSAPI…RPLLTVSAWR (381 aa)) folds into the GRAS domain. The leucine repeat I (LRI) stretch occupies residues 205–264 (APILQSLLSCSRAAATDPGLAAAELASVRAAATDAGDPSERLAFYFADALSRRLACGTGA). The interval 283 to 349 (YKTLNDACPY…GKPTRIRITG (67 aa)) is VHIID. The short motif at 314-318 (IHIVD) is the VHIID element. The tract at residues 365–397 (ATNTRLRDFAKLLGVDFEFVPLLRPVHELNKSD) is leucine repeat II (LRII). Residues 406–497 (VAVNFMLQLY…RWMFGERIQR (92 aa)) form a PFYRE region. The short motif at 414–418 (LYHLL) is the LXXLL motif element. The SAW stretch occupies residues 500–578 (GPEEGADRTE…RPLLTVSAWR (79 aa)).

Belongs to the GRAS family. In terms of assembly, homodimer.

It localises to the nucleus. In terms of biological role, probable transcription factor involved in plant development. Involved in environmental abiotic stress resistance. May increase the expression of stress-responsive genes. Binds DNA in vitro. This chain is SCARECROW-LIKE protein 7, found in Oryza sativa subsp. japonica (Rice).